Consider the following 585-residue polypeptide: Frizzled-5 (585 aa).

An N-terminal signal peptide occupies residues 1–26 (MARPDPSAPPSLLLLLLAQLVGRAAA). Residues 27–238 (ASKAPVCQEI…PDERTFATFW (212 aa)) are Extracellular-facing. An FZ domain is found at 28 to 150 (SKAPVCQEIT…GDAEVLCMDY (123 aa)). 5 cysteine pairs are disulfide-bonded: cysteine 33–cysteine 94, cysteine 41–cysteine 87, cysteine 78–cysteine 116, cysteine 105–cysteine 147, and cysteine 109–cysteine 133. Asparagine 47 carries N-linked (GlcNAc...) asparagine glycosylation. Residue asparagine 151 is glycosylated (N-linked (GlcNAc...) asparagine). Residues 156-182 (TTASPKSFPAKPTLPGPPGAPSSGGEC) are disordered. The helical transmembrane segment at 239–259 (IGLWSVLCFISTSTTVATFLI) threads the bilayer. Topologically, residues 260-270 (DMERFRYPERP) are cytoplasmic. A helical transmembrane segment spans residues 271-291 (IIFLSACYLCVSLGFLVRLVV). Topologically, residues 292–315 (GHASVACSREHSHIHYETTGPALC) are extracellular. A helical membrane pass occupies residues 316-336 (TVVFLLVYFFGMASSIWWVIL). Topologically, residues 337-358 (SLTWFLAAGMKWGNEAIAGYAQ) are cytoplasmic. Residues 359 to 379 (YFHLAAWLIPSVKSITALALS) form a helical membrane-spanning segment. The Extracellular portion of the chain corresponds to 380–402 (SVDGDPVAGVCYVGNQNLNSLRG). Residues 403–423 (FVLGPLVLYLLVGTLFLLAGF) form a helical membrane-spanning segment. At 424 to 449 (VSLFRIRSVIKQGGTKTDKLEKLMIR) the chain is on the cytoplasmic side. A helical membrane pass occupies residues 450–470 (IGIFTLLYTVPASIVVACYLY). At 471-500 (EQHYRESWEAALTCACPGSDAGQPRAKPEY) the chain is on the extracellular side. The chain crosses the membrane as a helical span at residues 501-521 (WVLMLKYFMCLVVGITSGVWI). Residues 522-585 (WSGKTLESWR…YHKQVSLSHV (64 aa)) are Cytoplasmic-facing. Residues 525–530 (KTLESW) carry the Lys-Thr-X-X-X-Trp motif, mediates interaction with the PDZ domain of Dvl family members motif. The PDZ-binding signature appears at 583-585 (SHV).

This sequence belongs to the G-protein coupled receptor Fz/Smo family. As to quaternary structure, binding of unsaturated fatty acid molecules (via FZ domain) promotes homodimerization (via FZ domain). Interacts with WNT2B. Interacts with WNT7A. Interacts with GOPC. In terms of processing, ubiquitinated by RNF43 and ZNRF3, leading to its degradation by the proteasome.

The protein resides in the cell membrane. Its subcellular location is the golgi apparatus membrane. It localises to the synapse. The protein localises to the perikaryon. It is found in the cell projection. The protein resides in the dendrite. Its subcellular location is the axon. Functionally, receptor for Wnt proteins. Functions in the canonical Wnt/beta-catenin signaling pathway. In vitro activates WNT2, WNT10B, WNT5A, but not WNT2B or WNT4 signaling. In neurons, activation by WNT7A promotes formation of synapses. May be involved in transduction and intercellular transmission of polarity information during tissue morphogenesis and/or in differentiated tissues. Plays a role in yolk sac angiogenesis and in placental vascularization. Plays a role in ocular development. The protein is Frizzled-5 (Fzd5) of Rattus norvegicus (Rat).